Consider the following 129-residue polypeptide: Procyclic form-specific polypeptide A-beta (129 aa).

A signal peptide spans 1 to 27 (MAPRSLYLLAVLLFSANLFAGVGFAAA). The disordered stretch occupies residues 27-111 (AAEGPEDKGL…PEPEPGAATL (85 aa)). A compositionally biased stretch (acidic residues) spans 53–104 (DDTNGTDPDPEPEPEPEPEPEPEPEPEPEPEPEPEPEPEPEPEPEPEPEPEP). A glycan (N-linked (GlcNAc...) asparagine) is linked at Asn56. 24 tandem repeats follow at residues 59–60 (DP), 61–62 (DP), 63–64 (EP), 65–66 (EP), 67–68 (EP), 69–70 (EP), 71–72 (EP), 73–74 (EP), 75–76 (EP), 77–78 (EP), 79–80 (EP), 81–82 (EP), 83–84 (EP), 85–86 (EP), 87–88 (EP), 89–90 (EP), 91–92 (EP), 93–94 (EP), 95–96 (EP), 97–98 (EP), 99–100 (EP), 101–102 (EP), 103–104 (EP), and 105–106 (EP). Positions 59–106 (DPDPEPEPEPEPEPEPEPEPEPEPEPEPEPEPEPEPEPEPEPEPEPEP) are 24 X 2 AA tandem repeats of [DE]-P. Residue Gly107 is the site of GPI-anchor amidated glycine attachment. Positions 108–129 (AATLKSVALPFAIAAVGLVAAF) are excised as a propeptide.

Its subcellular location is the cell membrane. In terms of biological role, major surface antigen of procyclic forms. The sequence is that of Procyclic form-specific polypeptide A-beta (PARPA-BETA) from Trypanosoma brucei brucei.